A 261-amino-acid polypeptide reads, in one-letter code: Acetoacetate decarboxylase 2 (261 aa).

The active-site Schiff-base intermediate with acetoacetate is Lys116.

Belongs to the ADC family.

It catalyses the reaction acetoacetate + H(+) = acetone + CO2. Functionally, catalyzes the conversion of acetoacetate to acetone and carbon dioxide. This is Acetoacetate decarboxylase 2 from Mesorhizobium japonicum (strain LMG 29417 / CECT 9101 / MAFF 303099) (Mesorhizobium loti (strain MAFF 303099)).